Here is a 102-residue protein sequence, read N- to C-terminus: Flagellar hook-basal body complex protein FliE (102 aa).

It belongs to the FliE family.

It localises to the bacterial flagellum basal body. This chain is Flagellar hook-basal body complex protein FliE, found in Oceanobacillus iheyensis (strain DSM 14371 / CIP 107618 / JCM 11309 / KCTC 3954 / HTE831).